Consider the following 607-residue polypeptide: Elongation factor 4 (607 aa).

One can recognise a tr-type G domain in the interval 6 to 188; it reads SRIRNFSIIA…AIVARIPPPR (183 aa). GTP-binding positions include 18-23 and 135-138; these read DHGKST and NKID.

It belongs to the TRAFAC class translation factor GTPase superfamily. Classic translation factor GTPase family. LepA subfamily.

The protein resides in the cell inner membrane. The enzyme catalyses GTP + H2O = GDP + phosphate + H(+). Functionally, required for accurate and efficient protein synthesis under certain stress conditions. May act as a fidelity factor of the translation reaction, by catalyzing a one-codon backward translocation of tRNAs on improperly translocated ribosomes. Back-translocation proceeds from a post-translocation (POST) complex to a pre-translocation (PRE) complex, thus giving elongation factor G a second chance to translocate the tRNAs correctly. Binds to ribosomes in a GTP-dependent manner. The polypeptide is Elongation factor 4 (Sphingopyxis alaskensis (strain DSM 13593 / LMG 18877 / RB2256) (Sphingomonas alaskensis)).